Reading from the N-terminus, the 96-residue chain is Aspartyl/glutamyl-tRNA(Asn/Gln) amidotransferase subunit C (96 aa).

Belongs to the GatC family. Heterotrimer of A, B and C subunits.

It carries out the reaction L-glutamyl-tRNA(Gln) + L-glutamine + ATP + H2O = L-glutaminyl-tRNA(Gln) + L-glutamate + ADP + phosphate + H(+). The catalysed reaction is L-aspartyl-tRNA(Asn) + L-glutamine + ATP + H2O = L-asparaginyl-tRNA(Asn) + L-glutamate + ADP + phosphate + 2 H(+). Allows the formation of correctly charged Asn-tRNA(Asn) or Gln-tRNA(Gln) through the transamidation of misacylated Asp-tRNA(Asn) or Glu-tRNA(Gln) in organisms which lack either or both of asparaginyl-tRNA or glutaminyl-tRNA synthetases. The reaction takes place in the presence of glutamine and ATP through an activated phospho-Asp-tRNA(Asn) or phospho-Glu-tRNA(Gln). This Chloroflexus aurantiacus (strain ATCC 29366 / DSM 635 / J-10-fl) protein is Aspartyl/glutamyl-tRNA(Asn/Gln) amidotransferase subunit C.